Here is a 101-residue protein sequence, read N- to C-terminus: Toxin Tpa8 (101 aa).

Residues 1-20 (MVKSEMKLVIFSLFLLLIGV) form the signal peptide. One can recognise an LCN-type CS-alpha/beta domain in the interval 24 to 98 (KNGYPVIEGG…VMDRTKEYCE (75 aa)). Cystine bridges form between Cys44-Cys70, Cys56-Cys75, Cys60-Cys77, and Cys71-Cys97.

This sequence belongs to the long (4 C-C) scorpion toxin superfamily. Sodium channel inhibitor family. Beta subfamily. Expressed by the venom gland.

Its subcellular location is the secreted. Excitatory insect beta-toxins induce a spastic paralysis. They bind voltage-independently at site-4 of sodium channels (Nav) and shift the voltage of activation toward more negative potentials thereby affecting sodium channel activation and promoting spontaneous and repetitive firing. The sequence is that of Toxin Tpa8 from Tityus pachyurus (Colombian scorpion).